We begin with the raw amino-acid sequence, 80 residues long: MAFLKKSLFLVLFLGIVSLSICEEEKRVGEEEEKQEEENEELSEEELRERRAWLDKLKSLGKVVGKVAIGVAQHYLNPQQ.

The N-terminal stretch at 1 to 22 (MAFLKKSLFLVLFLGIVSLSIC) is a signal peptide. A propeptide spanning residues 23-49 (EEEKRVGEEEEKQEEENEELSEEELRE) is cleaved from the precursor. The interval 27–46 (RVGEEEEKQEEENEELSEEE) is disordered. Over residues 30 to 44 (EEEEKQEEENEELSE) the composition is skewed to acidic residues.

This sequence belongs to the frog skin active peptide (FSAP) family. Dermaseptin subfamily. As to expression, expressed by the skin glands.

The protein localises to the secreted. Functionally, has antibacterial activity. This Boana raniceps (Chaco tree frog) protein is Raniseptin-2.